The sequence spans 204 residues: MECKLVNLSNNDVGTTQLNPLIFSVEQKLSILHDIVRWQLAKRRAGTHKVKGISDVSGTTAKPYSQKRTGRARQGSLRSPQFRGGGVIFGPIVRSHAYSLNKKVRKFGLKVALSLKYLNNQVIILNNLNINVKKTSEMCKYIQNFKFSSFLIVGDYEDSLLRAARNLHYVNLIKPIGLNVFDILNHECIMLTSDALRYLEGRLL.

Positions Ile53–Leu77 are disordered. A compositionally biased stretch (polar residues) spans Val56–Lys67.

It belongs to the universal ribosomal protein uL4 family. As to quaternary structure, part of the 50S ribosomal subunit.

Functionally, one of the primary rRNA binding proteins, this protein initially binds near the 5'-end of the 23S rRNA. It is important during the early stages of 50S assembly. It makes multiple contacts with different domains of the 23S rRNA in the assembled 50S subunit and ribosome. Forms part of the polypeptide exit tunnel. The sequence is that of Large ribosomal subunit protein uL4 from Wolbachia sp. subsp. Brugia malayi (strain TRS).